The following is a 63-amino-acid chain: Sec-independent protein translocase protein TatA (63 aa).

Residues 1 to 21 (MGSFSMWHWLIVLVIVLLLFG) traverse the membrane as a helical segment. The tract at residues 42-63 (GMTDDDAPDTAKTVDHKADETK) is disordered. Positions 53 to 63 (KTVDHKADETK) are enriched in basic and acidic residues.

This sequence belongs to the TatA/E family. In terms of assembly, the Tat system comprises two distinct complexes: a TatABC complex, containing multiple copies of TatA, TatB and TatC subunits, and a separate TatA complex, containing only TatA subunits. Substrates initially bind to the TatABC complex, which probably triggers association of the separate TatA complex to form the active translocon.

It is found in the cell inner membrane. Part of the twin-arginine translocation (Tat) system that transports large folded proteins containing a characteristic twin-arginine motif in their signal peptide across membranes. TatA could form the protein-conducting channel of the Tat system. This Rhizobium etli (strain CIAT 652) protein is Sec-independent protein translocase protein TatA.